The chain runs to 320 residues: 3-ketodihydrosphingosine reductase TSC10 (320 aa).

Over 1–254 (MKFTLEDQVV…IIAKSLARGD (254 aa)) the chain is Cytoplasmic. L11 lines the NADP(+) pocket. G14, S16, and G18 together coordinate NADPH. The GXSXG signature appears at 14-18 (GGSQG). L19 contributes to the NADP(+) binding site. 4 residues coordinate NADPH: R41, R45, D89, and L90. Position 89 (D89) interacts with NADP(+). S166 functions as the Proton donor in the catalytic mechanism. 3 residues coordinate NADP(+): Y180, K184, and S213. Residue Y180 is the Proton acceptor of the active site. Residue K184 is the Lowers pKa of active site Tyr of the active site. Residues 255–275 (DDVFTDFVGWMIMGMDLGLTA) traverse the membrane as a helical segment. Over 276–279 (KKSR) the chain is Lumenal. The chain crosses the membrane as a helical span at residues 280 to 300 (FVPLQWIFGVLSNILVVPFYM). Residues 301–320 (VGCSWYIRKWFRENDGKKAN) are Cytoplasmic-facing.

Belongs to the short-chain dehydrogenases/reductases (SDR) family. In terms of assembly, dimer or tetramer.

Its subcellular location is the endoplasmic reticulum membrane. The enzyme catalyses sphinganine + NADP(+) = 3-oxosphinganine + NADPH + H(+). The protein operates within lipid metabolism; sphingolipid metabolism. In terms of biological role, catalyzes the reduction of 3'-oxosphinganine (3-ketodihydrosphingosine/KDS) to sphinganine (dihydrosphingosine/DHS), the second step of de novo sphingolipid biosynthesis. This is 3-ketodihydrosphingosine reductase TSC10 from Saccharomyces cerevisiae (strain ATCC 204508 / S288c) (Baker's yeast).